Here is a 307-residue protein sequence, read N- to C-terminus: tRNA N(3)-methylcytidine methyltransferase trm140 (307 aa).

Residues tryptophan 83, tyrosine 87, glycine 125, aspartate 150, aspartate 176, leucine 177, and isoleucine 197 each contribute to the S-adenosyl-L-methionine site.

This sequence belongs to the methyltransferase superfamily. METL family.

It catalyses the reaction cytidine(32) in tRNA(Thr) + S-adenosyl-L-methionine = N(3)-methylcytidine(32) in tRNA(Thr) + S-adenosyl-L-homocysteine + H(+). Its function is as follows. S-adenosyl-L-methionine-dependent methyltransferase that mediates N(3)-methylcytidine modification of residue 32 of the tRNA anticodon loop of tRNA(Thr). Does not catalyze N(3)-methylcytidine modification of tRNA(Ser). This chain is tRNA N(3)-methylcytidine methyltransferase trm140, found in Schizosaccharomyces pombe (strain 972 / ATCC 24843) (Fission yeast).